A 161-amino-acid chain; its full sequence is MASFTCSSPSSILPIIDTRSGNLRCTFQSQVSCGIQRDDNGRRVWRRRTLTKKDDMLRYKMQRVPFVEEQVRKIREVGKVMTMDIEQLLLREDNRFEFVNSVAAEATEYVDKNRDEYGGSKKAIFHVLSNRVNDLGFDRPEAYVEADPYKPGPGYLLEYYT.

The N-terminal 32 residues, 1 to 32 (MASFTCSSPSSILPIIDTRSGNLRCTFQSQVS), are a transit peptide targeting the chloroplast.

In terms of assembly, component of the transcriptionally active chromosome (TAC) complexes. Interacts with FLN1, PTAC10, PTAC12/HMR/PAP5 and PTAC14. Binds to SL1/MTERF3. As to expression, mostly expressed in leaves, flowers and seedlings, and, to a lower extent, in roots and stems.

It is found in the plastid. Its subcellular location is the chloroplast. Essential for chloroplast development, especially for thylakoid formation. Involved in plastid gene expression, probably by maintaining plastid-encoded RNA polymerase (PEP) activity. The protein is Protein PLASTID TRANSCRIPTIONALLY ACTIVE 7 of Arabidopsis thaliana (Mouse-ear cress).